A 380-amino-acid polypeptide reads, in one-letter code: Probable RAD2-like endonuclease 076L (380 aa).

The N-domain stretch occupies residues 1–101 (MGIKNLTQFL…QKIVSKTDAI (101 aa)). Mg(2+) contacts are provided by D32, E73, E191, E193, D212, D214, and D281. The I-domain stretch occupies residues 156–301 (IDRRRKYEFS…EKAYKYISDY (146 aa)).

Belongs to the XPG/RAD2 endonuclease family. Mg(2+) serves as cofactor.

It localises to the host nucleus. Probable endonuclease. The chain is Probable RAD2-like endonuclease 076L from Invertebrate iridescent virus 3 (IIV-3).